The following is a 38-amino-acid chain: Beta-defensin 8 (38 aa).

Disulfide bonds link C7-C36, C14-C29, and C19-C37.

This sequence belongs to the beta-defensin family. As to expression, neutrophilic granules.

It localises to the secreted. Functionally, has bactericidal activity. Active against E.coli ML35 and S.aureus 502A. This chain is Beta-defensin 8 (DEFB8), found in Bos taurus (Bovine).